Consider the following 91-residue polypeptide: Small ribosomal subunit protein uS19 (91 aa).

This sequence belongs to the universal ribosomal protein uS19 family.

Its function is as follows. Protein S19 forms a complex with S13 that binds strongly to the 16S ribosomal RNA. This Synechococcus sp. (strain CC9902) protein is Small ribosomal subunit protein uS19.